A 192-amino-acid polypeptide reads, in one-letter code: Putative inactive ribonuclease 11 (192 aa).

Positions 1–15 (MAVFLLLLALGLLLA) are cleaved as a signal peptide. The tract at residues 21–54 (RMKGTTEQFSQEEMQPAAKQTLEESANSTLSDKN) is disordered. The segment covering 43–54 (EESANSTLSDKN) has biased composition (polar residues). 2 N-linked (GlcNAc...) asparagine glycosylation sites follow: asparagine 47 and asparagine 104.

It belongs to the pancreatic ribonuclease family.

The protein resides in the secreted. This Mus musculus (Mouse) protein is Putative inactive ribonuclease 11 (Rnase11).